Reading from the N-terminus, the 369-residue chain is ATP-dependent (S)-NAD(P)H-hydrate dehydratase (369 aa).

The YjeF C-terminal domain maps to 14 to 356 (LFQKARKLVP…DEVHESFLTL (343 aa)). (6S)-NADPHX-binding positions include G126 and 179 to 185 (NVNEFSR). Residues 231 to 235 (KGPHD) and 250 to 259 (GGLKRSGGQG) each bind ATP. Position 260 (D260) interacts with (6S)-NADPHX. Residues 284-306 (GEQEHSKEAENKEEVQGELESNK) are compositionally biased toward basic and acidic residues. Positions 284–307 (GEQEHSKEAENKEEVQGELESNKR) are disordered.

This sequence belongs to the NnrD/CARKD family. Mg(2+) serves as cofactor.

Its subcellular location is the cytoplasm. It carries out the reaction (6S)-NADHX + ATP = ADP + phosphate + NADH + H(+). The catalysed reaction is (6S)-NADPHX + ATP = ADP + phosphate + NADPH + H(+). Its function is as follows. Catalyzes the dehydration of the S-form of NAD(P)HX at the expense of ATP, which is converted to ADP. Together with NAD(P)HX epimerase, which catalyzes the epimerization of the S- and R-forms, the enzyme allows the repair of both epimers of NAD(P)HX, a damaged form of NAD(P)H that is a result of enzymatic or heat-dependent hydration. In Emericella nidulans (strain FGSC A4 / ATCC 38163 / CBS 112.46 / NRRL 194 / M139) (Aspergillus nidulans), this protein is ATP-dependent (S)-NAD(P)H-hydrate dehydratase.